A 383-amino-acid chain; its full sequence is 8-amino-7-oxononanoate synthase (383 aa).

Arg21 is a substrate binding site. 108–109 (GY) provides a ligand contact to pyridoxal 5'-phosphate. His133 is a substrate binding site. Positions 179, 207, and 233 each coordinate pyridoxal 5'-phosphate. N6-(pyridoxal phosphate)lysine is present on Lys236. Thr350 lines the substrate pocket.

It belongs to the class-II pyridoxal-phosphate-dependent aminotransferase family. BioF subfamily. As to quaternary structure, homodimer. It depends on pyridoxal 5'-phosphate as a cofactor.

The enzyme catalyses 6-carboxyhexanoyl-[ACP] + L-alanine + H(+) = (8S)-8-amino-7-oxononanoate + holo-[ACP] + CO2. It participates in cofactor biosynthesis; biotin biosynthesis. Catalyzes the decarboxylative condensation of pimeloyl-[acyl-carrier protein] and L-alanine to produce 8-amino-7-oxononanoate (AON), [acyl-carrier protein], and carbon dioxide. The sequence is that of 8-amino-7-oxononanoate synthase from Serratia proteamaculans (strain 568).